The chain runs to 555 residues: MILAGRAPSNTSTLMKFYSLLLYSLLFSFPFLYHPLPLPSYLHHTINLTHSLPAASNPSLANNCWLCISLSSSAYIAVPTLQTDRATSPVSLHLRTSFNSPHLYPPEELIYFLDRSSKTSPDISHQPAAALLHIYLKNLSPYINSTPPIFGPLTTQTTIPVAAPLCISRQRPTGIPLGNISPSRCSFTLHLQSPTTHVTETIGVFQLHIIDKPSINTDKLKNVSSNYCLGRHLPYISLHPWLPSPCSSDSPPRPSSCLLTPSPQNNSERLLVDTQRFLIHHENRTSSSMQLAHQSPLQPLTAAALAGSLGVWVQDTPFSTPSHPFSLHLQFCLTQGLFFLCGSSTYMCLPANWTGTCTLVFLTPKIQFANGTKELPVPLMTLTPQKRVIPLIPLMVGLGLSASTIALSTGIAGISTSVTTFRSPSNDFSASITDISQTLSVLQAQVDSLAAVVLQNRRGLGLSILLNEECCFYLNQSGLVYENIKKLKDRAQKLANQASNYAESPWALSNWMSWVLPILSPLIPIFLLLLFGPCIFHLVSQFIQNRIQAITNHSI.

Residues 1–35 (MILAGRAPSNTSTLMKFYSLLLYSLLFSFPFLYHP) form the signal peptide. The Extracellular portion of the chain corresponds to 36–515 (LPLPSYLHHT…WALSNWMSWV (480 aa)). Asn-47 carries N-linked (GlcNAc...) asparagine glycosylation. The short motif at 64–67 (CWLC) is the CXXC element. N-linked (GlcNAc...) asparagine glycans are attached at residues Asn-222, Asn-265, Asn-283, Asn-352, and Asn-370. The interval 388-408 (VIPLIPLMVGLGLSASTIALS) is fusion peptide. N-linked (GlcNAc...) asparagine glycosylation is present at Asn-475. A helical transmembrane segment spans residues 516 to 536 (LPILSPLIPIFLLLLFGPCIF). Over 537–555 (HLVSQFIQNRIQAITNHSI) the chain is Cytoplasmic.

It belongs to the gamma type-C retroviral envelope protein family. HERV class-I H env subfamily. In terms of assembly, the surface (SU) and transmembrane (TM) proteins form a heterodimer. SU and TM are attached by noncovalent interactions or by a labile interchain disulfide bond. Specific enzymatic cleavages in vivo yield the mature SU and TM proteins. Low expression in testis.

The protein localises to the virion. Its subcellular location is the cell membrane. Retroviral envelope proteins mediate receptor recognition and membrane fusion during early infection. Endogenous envelope proteins may have kept, lost or modified their original function during evolution. This endogenous envelope protein has lost its original fusogenic properties. Its function is as follows. SU mediates receptor recognition. In terms of biological role, TM anchors the envelope heterodimer to the viral membrane through one transmembrane domain. The other hydrophobic domain, called fusion peptide, mediates fusion of the viral membrane with the target cell membrane. The polypeptide is HERV-H_2q24.1 provirus ancestral Env polyprotein (Homo sapiens (Human)).